The primary structure comprises 158 residues: Transcriptional regulator MraZ (158 aa).

SpoVT-AbrB domains follow at residues 5–52 (IYET…TFSS) and 91–134 (AVEC…SQAE).

This sequence belongs to the MraZ family. Forms oligomers.

Its subcellular location is the cytoplasm. The protein localises to the nucleoid. The protein is Transcriptional regulator MraZ of Geobacter sulfurreducens (strain ATCC 51573 / DSM 12127 / PCA).